Here is a 1841-residue protein sequence, read N- to C-terminus: Sodium channel protein type 4 subunit alpha (1841 aa).

Over 1–131 the chain is Cytoplasmic; sequence MASSSLPTLV…RVAIKVLIHA (131 aa). The span at 32–60 shows a compositional bias: basic and acidic residues; sequence AMEEEARLQRNKQMEIEEPERKPRSDLEA. Positions 32-63 are disordered; sequence AMEEEARLQRNKQMEIEEPERKPRSDLEAGKN. One copy of the I repeat lies at 113–448; sequence MLSPFSIVRR…VVAMAYAEQN (336 aa). The helical transmembrane segment at 132 to 150 threads the bilayer; sequence LFSMFIMITILTNCVFMTM. The Extracellular portion of the chain corresponds to 151 to 157; it reads SNPPSWS. A helical transmembrane segment spans residues 158–178; it reads KDVEYTFTGIYTFESLIKMLA. Over 179–192 the chain is Cytoplasmic; it reads RGFCIDDFTFLRDP. A helical membrane pass occupies residues 193-210; that stretch reads WNWLDFSVITMAYVTEFV. Topologically, residues 211–216 are extracellular; that stretch reads DLGNIS. Residue N214 is glycosylated (N-linked (GlcNAc...) asparagine). Residues 217 to 233 traverse the membrane as a helical segment; sequence ALRTFRVLRALKTITVI. Residues 234–252 are Cytoplasmic-facing; the sequence is PGLKTIVGALIQSVKKLSD. The chain crosses the membrane as a helical span at residues 253–272; the sequence is VMILTVFCLSVFALVGLQLF. The Extracellular segment spans residues 273–385; sequence MGNLRQKCVR…PNYGYTSYDT (113 aa). The cysteines at positions 280 and 354 are disulfide-linked. N-linked (GlcNAc...) asparagine glycosylation is found at N288, N291, N297, N303, N315, N327, and N356. The cysteines at positions 363 and 369 are disulfide-linked. Residues 386–410 constitute an intramembrane region (pore-forming); that stretch reads FSWAFLALFRLMTQDYWENLFQLTL. Topologically, residues 411–417 are extracellular; sequence RAAGKTY. A helical membrane pass occupies residues 418-438; it reads MIFFVVIIFLGSFYLINLILA. Residues 439 to 572 are Cytoplasmic-facing; that stretch reads VVAMAYAEQN…HIILLIVMDP (134 aa). Positions 484 to 522 are disordered; the sequence is ALEGGEEADGDPTHSKDCNGSLDTSGEKGPPRPSCSAES. Residues 554-826 form an II repeat; sequence CCAPWVKFKH…QIAIGRIKWG (273 aa). Residues 573-591 traverse the membrane as a helical segment; the sequence is FVDLGITICIVLNTLFMAM. Residues 592–602 lie on the Extracellular side of the membrane; that stretch reads EHYPMTEHFDN. The helical transmembrane segment at 603–622 threads the bilayer; it reads VLSVGNLVFTGIFTAEMVLK. Over 623-636 the chain is Cytoplasmic; sequence LIAMDPYEYFQQGW. The helical transmembrane segment at 637–656 threads the bilayer; the sequence is NIFDSFIVTLSLVELGLANV. Over 657-658 the chain is Extracellular; sequence QG. The helical transmembrane segment at 659–676 threads the bilayer; sequence LSVLRSFRLLRVFKLAKS. Residues 677–692 lie on the Cytoplasmic side of the membrane; the sequence is WPTLNMLIKIIGNSVG. A helical membrane pass occupies residues 693-711; the sequence is ALGNLTLVLAIIVFIFAVV. Over 712-740 the chain is Extracellular; it reads GMQLFGKSYKECVCKIASDCSLPRWHMHD. A disulfide bridge connects residues C725 and C731. The segment at residues 741 to 761 is an intramembrane region (pore-forming); it reads FFHSFLIVFRILCGEWIETMW. Residues 762 to 772 lie on the Extracellular side of the membrane; it reads DCMEVAGQAMC. C763 and C772 are disulfide-bonded. Residues 773-791 form a helical membrane-spanning segment; the sequence is LTVFLMVMVIGNLVVLNLF. At 792 to 1026 the chain is on the cytoplasmic side; sequence LALLLSSFSA…ACFKIVEHNW (235 aa). Disordered stretches follow at residues 854 to 896 and 925 to 983; these read EPGG…LTDG and SDLE…EGEL. The segment covering 867–887 has biased composition (basic and acidic residues); it reads EDEKKEPPPEDGNKELKDNHI. 2 stretches are compositionally biased toward acidic residues: residues 925–941 and 969–983; these read SDLEMPTEEETDTFSEP and EDPEEQAEENPEGEL. The III repeat unit spans residues 1007-1320; sequence RGKMWWTLRR…KKYYNAMKKL (314 aa). A helical membrane pass occupies residues 1027–1044; the sequence is FETFIVFMILLSSGALAF. Topologically, residues 1045–1057 are extracellular; sequence EDIYIEQRRVIRT. Residues 1058–1076 traverse the membrane as a helical segment; it reads ILEYADKVFTYIFILEMLL. Residues 1077–1090 lie on the Cytoplasmic side of the membrane; the sequence is KWVAYGFKVYFTNA. A helical membrane pass occupies residues 1091 to 1109; it reads WCWLDFLIVDVSIISLVAN. Topologically, residues 1110–1117 are extracellular; that stretch reads WLGYSELG. Residues 1118–1136 form a helical membrane-spanning segment; sequence PIKSLRTLRALRPLRALSR. Residues 1137–1153 lie on the Cytoplasmic side of the membrane; that stretch reads FEGMRVVVNALLGAIPS. A helical membrane pass occupies residues 1154-1173; sequence IMNVLLVCLIFWLIFSIMGV. Topologically, residues 1174-1224 are extracellular; the sequence is NLFAGKFYYCINTTTSERFDISVVNNKSECESLMYTGQVRWMNVKVNYDNV. The cysteines at positions 1183 and 1203 are disulfide-linked. 2 N-linked (GlcNAc...) asparagine glycosylation sites follow: N1185 and N1199. Residues 1225-1246 constitute an intramembrane region (pore-forming); that stretch reads GLGYLSLLQVATFKGWMDIMYA. The Extracellular portion of the chain corresponds to 1247–1263; it reads AVDSREKEEQPDYEVNL. The helical transmembrane segment at 1264–1285 threads the bilayer; that stretch reads YMYLYFVIFIIFGSFFTLNLFI. Over 1286-1348 the chain is Cytoplasmic; the sequence is GVIIDNFNQQ…MVYDFVTKQV (63 aa). Residues 1304 to 1306 are important for rapid channel inactivation; the sequence is IFM. An IV repeat occupies 1329 to 1627; it reads IPRPQNKIQG…WEKFDPDATQ (299 aa). The chain crosses the membrane as a helical span at residues 1349–1366; the sequence is FDISIMILICLNMVTMMV. At 1367-1377 the chain is on the extracellular side; that stretch reads ETDDQSQLKVD. The helical transmembrane segment at 1378–1396 threads the bilayer; the sequence is ILYNINMVFIIVFTGECVL. Residues 1397-1408 are Cytoplasmic-facing; that stretch reads KMFALRHYYFTI. Residues 1409–1426 traverse the membrane as a helical segment; that stretch reads GWNIFDFVVVILSIVGLA. Residues 1427 to 1439 are Extracellular-facing; sequence LSDLIQKYFVSPT. Residues 1440 to 1456 traverse the membrane as a helical segment; it reads LFRVIRLARIGRVLRLI. The Cytoplasmic segment spans residues 1457 to 1475; that stretch reads RGAKGIRTLLFALMMSLPA. Residues 1476–1493 form a helical membrane-spanning segment; the sequence is LFNIGLLLFLVMFIYSIF. The Extracellular segment spans residues 1494-1515; the sequence is GMSNFAYVKKESGIDDMFNFET. The segment at residues 1516 to 1538 is an intramembrane region (pore-forming); that stretch reads FGNSIICLFEITTSAGWDGLLNP. Residues 1539-1568 are Extracellular-facing; that stretch reads ILNSGPPDCDPTLENPGTNIKGDCGNPSIG. C1547 and C1562 are disulfide-bonded. The helical transmembrane segment at 1569–1591 threads the bilayer; that stretch reads ICFFCSYIIISFLIVVNMYIAII. Residues 1592–1841 lie on the Cytoplasmic side of the membrane; the sequence is LENFNVATEE…VRPGVKESLV (250 aa). An IQ domain is found at 1721 to 1750; the sequence is EEVCAIKIQRAYRRHLLQRSVKQASYMYRH. Over residues 1776–1794 the composition is skewed to basic and acidic residues; sequence SEKEDNGVQSQGEKEKDST. The tract at residues 1776–1841 is disordered; the sequence is SEKEDNGVQS…VRPGVKESLV (66 aa). Residues 1801-1812 are compositionally biased toward polar residues; the sequence is TEVTAPSSSDTA. Over residues 1814 to 1826 the composition is skewed to pro residues; it reads TPPPPSPPPPSSP.

It belongs to the sodium channel (TC 1.A.1.10) family. Nav1.4/SCN4A subfamily. The Nav1.4 voltage-gated sodium channel consists of an ion-conducting alpha subunit SCN4A which is functional on its own and a regulatory beta subunit SCN1B. SCN1B strongly enhances the presence of SCN4A at the cell surface. SCN1B is also required for rapid channel inactivation and recovery after inactivation. It prevents the decrease of channel activity in response to repetitive, high-frequency depolarizations. Interacts with the syntrophins SNTA1, SNTB1 and SNTB2 (via PDZ domain); probably links SCN4A to the actin cytoskeleton and the extracellular matrix via the dystrophin-associated protein complex and regulates its localization in muscle cells. Interacts with TMEM233; probable regulator of the channel. As to expression, detected in quadriceps muscle (at protein level). Detected in hind-limb skeletal muscles, but not in heart or brain. Detected at low levels in the myocardium. According to Pubme=26427606 detected also in brain.

It localises to the cell membrane. The catalysed reaction is Na(+)(in) = Na(+)(out). With respect to regulation, the channel is inhibited by tetrodotoxin. Pore-forming subunit of Nav1.4, a voltage-gated sodium (Nav) channel that directly mediates the depolarizing phase of action potentials in excitable membranes. Navs, also called VGSCs (voltage-gated sodium channels) or VDSCs (voltage-dependent sodium channels), operate by switching between closed and open conformations depending on the voltage difference across the membrane. In the open conformation they allow Na(+) ions to selectively pass through the pore, along their electrochemical gradient. The influx of Na+ ions provokes membrane depolarization, initiating the propagation of electrical signals throughout cells and tissues. Highly expressed in skeletal muscles, Nav1.4 generates the action potential crucial for muscle contraction. The protein is Sodium channel protein type 4 subunit alpha of Mus musculus (Mouse).